A 696-amino-acid polypeptide reads, in one-letter code: MSKQQYRLGIDAGGTFTDFILADHQGNVQLFKAPSTPHDGTLAIRNGLAQIADALGRTPAEIIADCDLCINGTTVALNALIEKTGVKVGLLCTDGHEDSLEIRLGHKEDGHRYDATYPPAHMLVPRHLRRPIGGRIISDGSEFSPLDEAAIHAAIDYFREQQVQAVAISFVWSVRNPSHEQRAMAMVRAALPDVFVCSGHEVFPQIREYTRTSTTVVNAYLSPVMGRYIERIDALFEELGAQQPTRYFQSNGGLAPGVVMRERAVNAINSGPASAPQAGLCVAQPFGIDNVITVDMGGTSFDITLSKGGRTNFSKDSDFLRYRIGVPMIQVETLGAGGGSIAHLDDFGMLQVGPRSAGANPGPVCYGKGGVEPTVTDANLALGYLADGALLGGSIRLNRQAAIDAIRSKIAEPLGISVERAAVGIITLVNLSMVSGIRRVSIERGYDPRDFALIGAGGAAGMHVMRLAEEIGSKVVLIPKVASGLCAFGQILSDIRYDQLTTLPMRLDDEFVDLEQLNQALQQLRERGMTNLRDDGFGGDNRIECQYSLEIRYLGQIHECSVELSCDRLDRSSLAALRESFHQRHKALFSYSEPNSPVELVNLECSVIARLQRPPMPELATPLKATAAIPAGHRPMLFNAQDDWQDTPVYNGDRIEVGQIIQGPCVIEEATTNILVPPGWRVSLDPSATYELTPGH.

The protein belongs to the HyuA family. The caprolactamase is a heterotetramer composed of two alpha subunits (CapA) and two beta subunits (CapB).

With respect to regulation, activity is dependent on the presence of ATP and bicarbonate. The requirement for bicarbonate may be related to allosteric activation through conformational effects, but it is also conceivable that carboxyphosphate is formed and acts as a mediator in caprolactam activation, forming carboxy- or phospholactim. Component of a caprolactamase involved in the degradation of caprolactam, an industrial compound mainly used in the production of Nylon 6. Catalyzes the ATP-dependent hydrolysis of the caprolactam ring to form 6-aminocaproic acid (6-ACA). The alpha subunit is responsible for ATP-dependent substrate phosphorylation. The enzyme cannot use 5-oxoproline. This chain is Caprolactamase subunit alpha, found in Pseudomonas jessenii.